We begin with the raw amino-acid sequence, 376 residues long: Histidinol-phosphate aminotransferase 1 (376 aa).

K235 carries the post-translational modification N6-(pyridoxal phosphate)lysine.

Belongs to the class-II pyridoxal-phosphate-dependent aminotransferase family. Histidinol-phosphate aminotransferase subfamily. Homodimer. It depends on pyridoxal 5'-phosphate as a cofactor.

The catalysed reaction is L-histidinol phosphate + 2-oxoglutarate = 3-(imidazol-4-yl)-2-oxopropyl phosphate + L-glutamate. Its pathway is amino-acid biosynthesis; L-histidine biosynthesis; L-histidine from 5-phospho-alpha-D-ribose 1-diphosphate: step 7/9. This Cupriavidus pinatubonensis (strain JMP 134 / LMG 1197) (Cupriavidus necator (strain JMP 134)) protein is Histidinol-phosphate aminotransferase 1.